The following is a 71-amino-acid chain: Conotoxin Bu24 (71 aa).

The first 21 residues, M1–S21, serve as a signal peptide directing secretion. A propeptide spanning residues L22–K44 is cleaved from the precursor. N70 carries the post-translational modification Asparagine amide.

This sequence belongs to the conotoxin A superfamily. Post-translationally, contains 3 disulfide bonds. They are not indicated here, since framework IV presents two different connectivities (I-V, II-III, IV-VI and I-III, II-V, IV-VI). Expressed by the venom duct.

Its subcellular location is the secreted. The chain is Conotoxin Bu24 from Conus bullatus (Bubble cone).